Here is a 142-residue protein sequence, read N- to C-terminus: Small ribosomal subunit protein uS12z (142 aa).

A Hydroxyproline modification is found at proline 61.

The protein belongs to the universal ribosomal protein uS12 family.

The chain is Small ribosomal subunit protein uS12z (RPS23A) from Arabidopsis thaliana (Mouse-ear cress).